The chain runs to 227 residues: N-(5'-phosphoribosyl)anthranilate isomerase (227 aa).

It belongs to the TrpF family.

It carries out the reaction N-(5-phospho-beta-D-ribosyl)anthranilate = 1-(2-carboxyphenylamino)-1-deoxy-D-ribulose 5-phosphate. It participates in amino-acid biosynthesis; L-tryptophan biosynthesis; L-tryptophan from chorismate: step 3/5. The polypeptide is N-(5'-phosphoribosyl)anthranilate isomerase (Herminiimonas arsenicoxydans).